The chain runs to 486 residues: MTIQHKQDLAQIRAMVPEMRRVKSIHFIGIGGAGMSGIAEVLLNEGYQITGSDIAENAVTERLAQKGAKVYIGHQATNVAEASVVVVSTAINEANPEVKAAREARIPVVRRAEMLAELMRFRHGIAVAGTHGKTTTTALVTQIYSEAGLDPTFVNGGLVKSAGTNARLGSSRILIAEADESDASFLHLQPMVCIVTNIEADHMDTYGGDFETLKQTFIDFLHNLPFYGQAIVCIDDPVIRELIPRISRQVITYGFSEDADVRIENYRQEGQQGKFTVVRKDCEALDITLNIPGRHNALNAAAAIAVATEDEIGDDAILAAMVGTQGTGRRFEHLGEFETGNGNVMLVDDYGHHPTEVDVTIQAARNGWQEKRLVMIFQPHRYSRTRDLYDDFANVLEQVDVLVMLDVYAAGEKAIAGADSRSLCRTIRSRGKIDPIFVADTQQLPEVLANILQEGDLLLAQGAGDIGKVARQLAALELNISNMKAK.

G129–T135 contacts ATP.

Belongs to the MurCDEF family.

It localises to the cytoplasm. The catalysed reaction is UDP-N-acetyl-alpha-D-muramate + L-alanine + ATP = UDP-N-acetyl-alpha-D-muramoyl-L-alanine + ADP + phosphate + H(+). It functions in the pathway cell wall biogenesis; peptidoglycan biosynthesis. Cell wall formation. This is UDP-N-acetylmuramate--L-alanine ligase from Vibrio vulnificus (strain CMCP6).